Reading from the N-terminus, the 161-residue chain is 2-C-methyl-D-erythritol 2,4-cyclodiphosphate synthase (161 aa).

Positions 10 and 12 each coordinate a divalent metal cation. 4-CDP-2-C-methyl-D-erythritol 2-phosphate-binding positions include Asp-10–His-12 and His-36–Ser-37. His-44 provides a ligand contact to a divalent metal cation. Residues Asp-58–Gly-60, Phe-63–Asp-67, Ala-102–Leu-108, Thr-134–Glu-137, Phe-141, and Arg-144 contribute to the 4-CDP-2-C-methyl-D-erythritol 2-phosphate site.

Belongs to the IspF family. In terms of assembly, homotrimer. The cofactor is a divalent metal cation.

The catalysed reaction is 4-CDP-2-C-methyl-D-erythritol 2-phosphate = 2-C-methyl-D-erythritol 2,4-cyclic diphosphate + CMP. It functions in the pathway isoprenoid biosynthesis; isopentenyl diphosphate biosynthesis via DXP pathway; isopentenyl diphosphate from 1-deoxy-D-xylulose 5-phosphate: step 4/6. Its function is as follows. Involved in the biosynthesis of isopentenyl diphosphate (IPP) and dimethylallyl diphosphate (DMAPP), two major building blocks of isoprenoid compounds. Catalyzes the conversion of 4-diphosphocytidyl-2-C-methyl-D-erythritol 2-phosphate (CDP-ME2P) to 2-C-methyl-D-erythritol 2,4-cyclodiphosphate (ME-CPP) with a corresponding release of cytidine 5-monophosphate (CMP). The polypeptide is 2-C-methyl-D-erythritol 2,4-cyclodiphosphate synthase (Shewanella loihica (strain ATCC BAA-1088 / PV-4)).